Consider the following 510-residue polypeptide: NAD(P)H-quinone oxidoreductase subunit 2 A, chloroplastic (510 aa).

13 consecutive transmembrane segments (helical) span residues 24–44 (LLLFNGSFIFPECILIFGLIL), 57–77 (TPWLYFISSTSLVMSITALLF), 99–119 (IFQFLILLCSTLCIPLSVEYI), 124–144 (MAITEFLLFVLTATLGGMFLC), 149–169 (LITIFVAPECFSLCSYLLSGY), 183–203 (YLLMGGASSSILVYGFSWLYG), 229–249 (ISIALISITVGIGFKLSPAPF), 295–315 (WHLLLEILAILSMILGNLIAI), 323–343 (MLAYSSIGQIGYVIIGIIVGD), 354–374 (YMLFYISMNLGTFACIVLFGL), 395–415 (ALSSALCLLSLGGIPPLAGFF), 418–438 (LYLFWCGWQAGLYFLVSIGLL), and 484–504 (MIVCVIASTIPGISMNPIIAI).

The protein belongs to the complex I subunit 2 family. NDH is composed of at least 16 different subunits, 5 of which are encoded in the nucleus.

It localises to the plastid. The protein localises to the chloroplast thylakoid membrane. The catalysed reaction is a plastoquinone + NADH + (n+1) H(+)(in) = a plastoquinol + NAD(+) + n H(+)(out). The enzyme catalyses a plastoquinone + NADPH + (n+1) H(+)(in) = a plastoquinol + NADP(+) + n H(+)(out). NDH shuttles electrons from NAD(P)H:plastoquinone, via FMN and iron-sulfur (Fe-S) centers, to quinones in the photosynthetic chain and possibly in a chloroplast respiratory chain. The immediate electron acceptor for the enzyme in this species is believed to be plastoquinone. Couples the redox reaction to proton translocation, and thus conserves the redox energy in a proton gradient. The protein is NAD(P)H-quinone oxidoreductase subunit 2 A, chloroplastic of Nuphar advena (Common spatterdock).